Consider the following 698-residue polypeptide: Polyribonucleotide nucleotidyltransferase (698 aa).

Mg(2+) contacts are provided by D485 and D491. Residues P552 to I611 form the KH domain. In terms of domain architecture, S1 motif spans G621–K689.

The protein belongs to the polyribonucleotide nucleotidyltransferase family. In terms of assembly, component of the RNA degradosome, which is a multiprotein complex involved in RNA processing and mRNA degradation. Requires Mg(2+) as cofactor.

The protein localises to the cytoplasm. The catalysed reaction is RNA(n+1) + phosphate = RNA(n) + a ribonucleoside 5'-diphosphate. Functionally, involved in mRNA degradation. Catalyzes the phosphorolysis of single-stranded polyribonucleotides processively in the 3'- to 5'-direction. The sequence is that of Polyribonucleotide nucleotidyltransferase from Shewanella frigidimarina (strain NCIMB 400).